The chain runs to 134 residues: Protein PsiE homolog (134 aa).

The next 4 helical transmembrane spans lie at 14–34 (LQWILNIALIILSIVLSIFLI), 56–76 (VESIIVYFLYFEFIALIIKYF), 82–102 (FPLRYFIYIGITALIRLIIVS), and 106–126 (PMETLLYAGAILVLVIALYIS).

It belongs to the PsiE family.

It is found in the cell membrane. This Bacillus anthracis protein is Protein PsiE homolog.